A 305-amino-acid chain; its full sequence is Tyrosine recombinase XerC (305 aa).

Residues 2 to 88 enclose the Core-binding (CB) domain; it reads NQLELYIDTF…TLRSFYRFLE (87 aa). The Tyr recombinase domain occupies 109–294; sequence PVPGFLYQEE…TKDHLREAYM (186 aa). Catalysis depends on residues arginine 149, lysine 173, histidine 246, arginine 249, and histidine 272. Tyrosine 281 functions as the O-(3'-phospho-DNA)-tyrosine intermediate in the catalytic mechanism.

It belongs to the 'phage' integrase family. XerC subfamily. Forms a cyclic heterotetrameric complex composed of two molecules of XerC and two molecules of XerD.

The protein localises to the cytoplasm. Its function is as follows. Site-specific tyrosine recombinase, which acts by catalyzing the cutting and rejoining of the recombining DNA molecules. The XerC-XerD complex is essential to convert dimers of the bacterial chromosome into monomers to permit their segregation at cell division. It also contributes to the segregational stability of plasmids. The sequence is that of Tyrosine recombinase XerC from Oceanobacillus iheyensis (strain DSM 14371 / CIP 107618 / JCM 11309 / KCTC 3954 / HTE831).